The primary structure comprises 124 residues: Small ribosomal subunit protein uS12 (124 aa).

It belongs to the universal ribosomal protein uS12 family. In terms of assembly, part of the 30S ribosomal subunit. Contacts proteins S8 and S17. May interact with IF1 in the 30S initiation complex.

Its function is as follows. With S4 and S5 plays an important role in translational accuracy. Functionally, interacts with and stabilizes bases of the 16S rRNA that are involved in tRNA selection in the A site and with the mRNA backbone. Located at the interface of the 30S and 50S subunits, it traverses the body of the 30S subunit contacting proteins on the other side and probably holding the rRNA structure together. The combined cluster of proteins S8, S12 and S17 appears to hold together the shoulder and platform of the 30S subunit. The chain is Small ribosomal subunit protein uS12 from Photorhabdus laumondii subsp. laumondii (strain DSM 15139 / CIP 105565 / TT01) (Photorhabdus luminescens subsp. laumondii).